Here is a 408-residue protein sequence, read N- to C-terminus: DNA polymerase processivity factor (408 aa).

A Nuclear localization signal motif is present at residues 344-353 (KKRRNLLTKR).

The protein belongs to the herpesviridae DNA polymerase processivity factor family. In terms of assembly, interacts with the DNA polymerase catalytic subunit. Interacts with the origin-binding protein.

It localises to the host nucleus. Plays an essential role in viral DNA replication by acting as the polymerase accessory subunit. Associates with the viral polymerase to increase its processivity and forms high-affinity direct interactions with DNA. Facilitates the origin-binding protein loading onto DNA thus increasing its ability to assemble into a functional complex capable of unwinding duplex DNA. This Varicella-zoster virus (strain Oka vaccine) (HHV-3) protein is DNA polymerase processivity factor.